A 233-amino-acid polypeptide reads, in one-letter code: Transmembrane protein 40 (233 aa).

Met-1 is subject to N-acetylmethionine. A compositionally biased stretch (polar residues) spans 1–14 (METSASSSQPQDNS). Positions 1–143 (METSASSSQP…RRGSDPASGE (143 aa)) are disordered. A compositionally biased stretch (low complexity) spans 50–70 (SSSSSSSSSSSSSSSSSSSSS). Over residues 93–104 (YPHGNGSPGPGH) the composition is skewed to gly residues. Basic and acidic residues predominate over residues 105–114 (GEPDVLKDEL). Ser-137 carries the post-translational modification Phosphoserine. 2 helical membrane-spanning segments follow: residues 160-180 (FFHF…YHYY) and 187-207 (LGVG…FGLV).

Its subcellular location is the membrane. This is Transmembrane protein 40 (TMEM40) from Homo sapiens (Human).